The sequence spans 226 residues: 2-C-methyl-D-erythritol 4-phosphate cytidylyltransferase (226 aa).

It belongs to the IspD/TarI cytidylyltransferase family. IspD subfamily.

It catalyses the reaction 2-C-methyl-D-erythritol 4-phosphate + CTP + H(+) = 4-CDP-2-C-methyl-D-erythritol + diphosphate. The protein operates within isoprenoid biosynthesis; isopentenyl diphosphate biosynthesis via DXP pathway; isopentenyl diphosphate from 1-deoxy-D-xylulose 5-phosphate: step 2/6. Catalyzes the formation of 4-diphosphocytidyl-2-C-methyl-D-erythritol from CTP and 2-C-methyl-D-erythritol 4-phosphate (MEP). The sequence is that of 2-C-methyl-D-erythritol 4-phosphate cytidylyltransferase from Rhodococcus opacus (strain B4).